The following is a 393-amino-acid chain: uncharacterized protein (393 aa).

Residues 12–70 (APLLGSKIKLNIEKLAIGGAGVARHEGMVVFVPQAAPNEEILAEITLVKKNFMEARVVE) enclose the TRAM domain. Residues Cys83, Cys89, Cys92, and Cys166 each coordinate [4Fe-4S] cluster. S-adenosyl-L-methionine-binding residues include Gln221, Tyr250, Glu273, and Asp316. Cys343 functions as the Nucleophile in the catalytic mechanism.

This sequence belongs to the class I-like SAM-binding methyltransferase superfamily. RNA M5U methyltransferase family.

This is an uncharacterized protein from Bdellovibrio bacteriovorus (strain ATCC 15356 / DSM 50701 / NCIMB 9529 / HD100).